Consider the following 267-residue polypeptide: 2-dehydro-3-deoxyphosphooctonate aldolase (267 aa).

The protein belongs to the KdsA family.

The protein resides in the cytoplasm. The enzyme catalyses D-arabinose 5-phosphate + phosphoenolpyruvate + H2O = 3-deoxy-alpha-D-manno-2-octulosonate-8-phosphate + phosphate. The protein operates within carbohydrate biosynthesis; 3-deoxy-D-manno-octulosonate biosynthesis; 3-deoxy-D-manno-octulosonate from D-ribulose 5-phosphate: step 2/3. It functions in the pathway bacterial outer membrane biogenesis; lipopolysaccharide biosynthesis. This Campylobacter jejuni subsp. doylei (strain ATCC BAA-1458 / RM4099 / 269.97) protein is 2-dehydro-3-deoxyphosphooctonate aldolase.